The chain runs to 809 residues: uncharacterized protein (809 aa).

An MHYT domain is found at His19–Val206. The next 7 membrane-spanning stretches (helical) occupy residues Leu23 to Ser43, Leu57 to Val77, Thr92 to Ala112, Gly122 to Val142, Ala152 to Ala172, Gly186 to Val206, and Thr224 to Ile244. The region spanning Glu254–Arg317 is the PAS domain. Residues Glu402–Arg536 form the GGDEF domain. The region spanning Arg545 to Asp795 is the EAL domain.

The protein resides in the cell membrane. This is an uncharacterized protein from Caulobacter vibrioides (strain ATCC 19089 / CIP 103742 / CB 15) (Caulobacter crescentus).